We begin with the raw amino-acid sequence, 95 residues long: Secretoglobin family 2A member 2 (95 aa).

An N-terminal signal peptide occupies residues 1–18 (MKLVFLFLLVTIPICCYA). A glycan (N-linked (GlcNAc...) asparagine) is linked at Asn35.

This sequence belongs to the secretoglobin family. Lipophilin subfamily. In terms of assembly, prostatein is composed of three different peptides called C1, C2 and C3. These form covalent C1:C3 (F) and C2:C3 (S) heterodimers whose non-covalent association forms tetrameric (C1:C3/C3:C2) prostatein molecules. Highly expressed in ventral prostate.

The protein resides in the secreted. In terms of biological role, part of prostatein which is the major secretory glycoprotein of ventral prostate gland. Steroid-binding protein; can bind non-polar steroids, cholesterol and a group of small proline-rich peptides. The protein is Secretoglobin family 2A member 2 (Scgb2a2) of Rattus norvegicus (Rat).